The chain runs to 296 residues: Probable transcription factor At1g44810 (296 aa).

Residues 1-119 (MNKKLLNPLE…AKKVSGDDDN (119 aa)) are disordered. The segment covering 19 to 28 (EDVDEEISSG) has biased composition (acidic residues). Polar residues predominate over residues 52–72 (TQTLNSPSTEAPTLDSGSETN). Residues 97-119 (RASEGTSSKDIKRAKKVSGDDDN) are compositionally biased toward basic and acidic residues.

This sequence belongs to the GeBP family.

This chain is Probable transcription factor At1g44810, found in Arabidopsis thaliana (Mouse-ear cress).